An 843-amino-acid polypeptide reads, in one-letter code: Probable disease resistance protein At5g47250 (843 aa).

Positions 28-58 (MLKENLVLLKSAFDELKAEKEDVVNRVNAGE) form a coiled coil. Positions 141–440 (TEQPPPPVVE…GEGFIDEKDG (300 aa)) constitute an NB-ARC domain. 183-190 (GMGGVGKT) provides a ligand contact to ATP. LRR repeat units follow at residues 510 to 531 (TVTK…PEFP), 535 to 556 (NLVT…FFLV), 559 to 581 (TLVV…ISAL), 583 to 604 (SLRL…LGVL), and 606 to 628 (KLIH…SELQ).

The protein belongs to the disease resistance NB-LRR family.

Probable disease resistance protein. This Arabidopsis thaliana (Mouse-ear cress) protein is Probable disease resistance protein At5g47250.